The sequence spans 123 residues: Omega-oxotoxin-Ot1a (123 aa).

Residues 1-16 (MKIVLVFVCTLYLAQA) form the signal peptide. A propeptide spanning residues 17–54 (TYLSEQDVNEVSEFLEALDQANEAASEMVEAAETEEAR) is cleaved from the precursor. An Oxytoxin-type inhibitor cystine knot (ICK) domain is found at 55–122 (DWECLPLHSS…GKINTCDKYK (68 aa)). 5 disulfide bridges follow: cysteine 58–cysteine 72, cysteine 65–cysteine 77, cysteine 69–cysteine 118, cysteine 71–cysteine 106, and cysteine 79–cysteine 104.

It belongs to the spiderine family. Spiderine subfamily. Mass spectrometry data suggest a carboxylated free C-terminal residue. In terms of tissue distribution, expressed by the venom gland.

Its subcellular location is the secreted. Its function is as follows. Weak blocker of vertebrate P/Q-, N- and L-type voltage-gated calcium channels (Cav1 and Cav2). Is both paralytic and lethal when injected into lepidopteran larvae. Is not toxic to mice. This Oxyopes takobius (Lynx spider) protein is Omega-oxotoxin-Ot1a.